Reading from the N-terminus, the 99-residue chain is Acylphosphatase (99 aa).

One can recognise an Acylphosphatase-like domain in the interval 11–97 (ARRIHVKGKV…VVAQGFTQKP (87 aa)). Active-site residues include arginine 26 and asparagine 44.

Belongs to the acylphosphatase family.

The enzyme catalyses an acyl phosphate + H2O = a carboxylate + phosphate + H(+). This Rhizorhabdus wittichii (strain DSM 6014 / CCUG 31198 / JCM 15750 / NBRC 105917 / EY 4224 / RW1) (Sphingomonas wittichii) protein is Acylphosphatase (acyP).